A 184-amino-acid chain; its full sequence is Elongation factor P (184 aa).

It belongs to the elongation factor P family.

The protein localises to the cytoplasm. It participates in protein biosynthesis; polypeptide chain elongation. Functionally, involved in peptide bond synthesis. Stimulates efficient translation and peptide-bond synthesis on native or reconstituted 70S ribosomes in vitro. Probably functions indirectly by altering the affinity of the ribosome for aminoacyl-tRNA, thus increasing their reactivity as acceptors for peptidyl transferase. In Polaromonas sp. (strain JS666 / ATCC BAA-500), this protein is Elongation factor P.